Consider the following 203-residue polypeptide: MDIFSWQLGLPSTLACLVFGYLLGSIPFGLILTRMAGLGDVRKIGSGNIGATNVLRTGNKKLAATTLLLDALKGTAAAAIASLWGVEAGMAAGLAAFLGHLFPVWLSFKGGKGVATYIGVLLGLVPVMVLLFAAAWLAVAKISRYSSLSALVATAIIPVALYATGNGKVALLFAVMTLIAWVKHRANIQRLMSGTESRIGEKG.

Helical transmembrane passes span 13 to 33 (TLACLVFGYLLGSIPFGLILT), 66 to 86 (TLLLDALKGTAAAAIASLWGV), 88 to 108 (AGMAAGLAAFLGHLFPVWLSF), 118 to 138 (IGVLLGLVPVMVLLFAAAWLA), and 156 to 176 (IIPVALYATGNGKVALLFAVM).

This sequence belongs to the PlsY family. In terms of assembly, probably interacts with PlsX.

Its subcellular location is the cell inner membrane. It carries out the reaction an acyl phosphate + sn-glycerol 3-phosphate = a 1-acyl-sn-glycero-3-phosphate + phosphate. Its pathway is lipid metabolism; phospholipid metabolism. Its function is as follows. Catalyzes the transfer of an acyl group from acyl-phosphate (acyl-PO(4)) to glycerol-3-phosphate (G3P) to form lysophosphatidic acid (LPA). This enzyme utilizes acyl-phosphate as fatty acyl donor, but not acyl-CoA or acyl-ACP. This is Glycerol-3-phosphate acyltransferase from Sinorhizobium medicae (strain WSM419) (Ensifer medicae).